The sequence spans 189 residues: Cancer/testis antigen family 45 member A5 (189 aa).

Basic and acidic residues predominate over residues 1–23; that stretch reads MTDKTEKVAVDPETVFKRPRECD. Disordered stretches follow at residues 1–27 and 82–118; these read MTDK…SPSY and DGMM…SPKS.

This sequence belongs to the CT45 family. In terms of tissue distribution, testis specific. Expressed in cancer cell lines.

The protein resides in the nucleus. This is Cancer/testis antigen family 45 member A5 from Homo sapiens (Human).